Consider the following 119-residue polypeptide: MSKLVVFLFCIQVCFIQNVYSQCLGRVGPGGPPLGPYGGPLGGPGYGPVGYGGCGGYGGSGIGNVAVAGELPVAGSTGVTGQVPVIGAVEFAGPACAVGSVSISGACGPTCGCGGSPFY.

Residues Met-1–Ser-21 form the signal peptide. The tract at residues Gln-22 to Gly-55 is left arm. The interval Gly-56–Ile-103 is central domain. The interval Ser-104–Tyr-119 is right arm.

This sequence belongs to the chorion protein family.

Its function is as follows. This protein is one of many from the eggshell of the silk moth. The protein is Chorion class CA protein ERA.2 (ERA.2) of Bombyx mori (Silk moth).